The sequence spans 725 residues: Peroxisomal fatty acid beta-oxidation multifunctional protein MFP2 (725 aa).

The Nucleophile role is filled by Glu-119. Catalysis depends on Glu-139, which acts as the Proton acceptor. The Microbody targeting signal motif lies at Ser-723 to Leu-725.

In the N-terminal section; belongs to the enoyl-CoA hydratase/isomerase family. It in the central section; belongs to the 3-hydroxyacyl-CoA dehydrogenase family. Highly expressed in senescing leaves and at lower levels in flowers and siliques.

The protein resides in the glyoxysome. Its subcellular location is the peroxisome. The enzyme catalyses a (3S)-3-hydroxyacyl-CoA = a (2E)-enoyl-CoA + H2O. It carries out the reaction a 4-saturated-(3S)-3-hydroxyacyl-CoA = a (3E)-enoyl-CoA + H2O. It catalyses the reaction (3S)-3-hydroxybutanoyl-CoA = (2E)-butenoyl-CoA + H2O. The catalysed reaction is (3S)-hydroxyoctanoyl-CoA = (2E)-octenoyl-CoA + H2O. The enzyme catalyses (3S)-3-hydroxydodecanoyl-CoA = (2E)-dodecenoyl-CoA + H2O. It carries out the reaction (3S)-hydroxytetradecanoyl-CoA = (2E)-tetradecenoyl-CoA + H2O. It catalyses the reaction (3S)-hydroxyhexanoyl-CoA = (2E)-hexenoyl-CoA + H2O. The catalysed reaction is a (3Z)-enoyl-CoA = a 4-saturated (2E)-enoyl-CoA. The enzyme catalyses a (3E)-enoyl-CoA = a 4-saturated (2E)-enoyl-CoA. It carries out the reaction (3S)-3-hydroxybutanoyl-CoA = (3R)-3-hydroxybutanoyl-CoA. It catalyses the reaction a (3S)-3-hydroxyacyl-CoA + NAD(+) = a 3-oxoacyl-CoA + NADH + H(+). The catalysed reaction is (3S)-3-hydroxybutanoyl-CoA + NAD(+) = acetoacetyl-CoA + NADH + H(+). The enzyme catalyses (3S)-hydroxyhexanoyl-CoA + NAD(+) = 3-oxohexanoyl-CoA + NADH + H(+). It carries out the reaction (3S)-hydroxyoctanoyl-CoA + NAD(+) = 3-oxooctanoyl-CoA + NADH + H(+). It catalyses the reaction (3S)-3-hydroxydodecanoyl-CoA + NAD(+) = 3-oxododecanoyl-CoA + NADH + H(+). The catalysed reaction is (3S)-hydroxytetradecanoyl-CoA + NAD(+) = 3-oxotetradecanoyl-CoA + NADH + H(+). The protein operates within lipid metabolism; fatty acid beta-oxidation. Involved in peroxisomal fatty acid beta-oxidation during seed germination. Possesses enoyl-CoA hydratase activity against long chain substrates (C14-C18) and 3-hydroxyacyl-CoA dehydrogenase activity against chains of variable sizes (C6-C18). Possesses 3-hydroxy-3-phenylpropionyl-CoA dehydrogenase activity and is involved in the peroxisomal beta-oxidation pathway for the biosynthesis of benzoic acid (BA). Required for the accumulation in seeds of substituted hydroxybenzoylated choline esters, which are BA-containing secondary metabolites. Fatty acid beta-oxidation pathway in peroxisomes regulates gene silencing, histone acetylation and DNA methylation. In Arabidopsis thaliana (Mouse-ear cress), this protein is Peroxisomal fatty acid beta-oxidation multifunctional protein MFP2.